Consider the following 290-residue polypeptide: UPF0761 membrane protein YihY (290 aa).

Helical transmembrane passes span 44 to 64, 104 to 124, 140 to 160, 183 to 203, 210 to 230, and 244 to 264; these read LLSL…FPMF, VGAC…DSAL, FAVY…SLAI, VLPL…VPTT, AIVG…GFAL, and VLAV…IVLL.

It belongs to the UPF0761 family.

Its subcellular location is the cell inner membrane. The chain is UPF0761 membrane protein YihY from Salmonella arizonae (strain ATCC BAA-731 / CDC346-86 / RSK2980).